A 122-amino-acid polypeptide reads, in one-letter code: MRHYEIVFIVHPDQSEQVPAMIERYKGIVTARGGVVHRVEDWGRRQMAYLIQKLAKAHYVCLNIECDGETLTEIETGFKFNDAVLRHLTVKMKKAETAPSPMMKAVQKEDAAKSHRTEAPAA.

The disordered stretch occupies residues 96 to 122 (ETAPSPMMKAVQKEDAAKSHRTEAPAA). Residues 106–122 (VQKEDAAKSHRTEAPAA) are compositionally biased toward basic and acidic residues.

This sequence belongs to the bacterial ribosomal protein bS6 family.

Its function is as follows. Binds together with bS18 to 16S ribosomal RNA. This chain is Small ribosomal subunit protein bS6, found in Herminiimonas arsenicoxydans.